We begin with the raw amino-acid sequence, 7031 residues long: Extracellular matrix-binding protein EbhB (7031 aa).

Residues 1 to 39 (MNYRDKIQKFSIRKYTVGTFSTVIATLVFLGFNTSQAHA) form the signal peptide. A compositionally biased stretch (polar residues) spans 41-59 (ETNQPASVVKQKQQSNNEQ). Disordered stretches follow at residues 41–86 (ETNQ…HENE), 99–152 (KVAQ…GNDN), 250–277 (PQRQQTSRRSNRIQTRSVESRAAEPRSV), 1342–1373 (NNITGNEKSQAEAGGRPNFRTTGYSQSNATTD), and 2418–2438 (TITPKAGTGHSVSSNPSTLTA). A compositionally biased stretch (low complexity) spans 65-80 (SQVQNSQNSQNGQSLS). Residues 99–117 (KVAQSSTTNDEQPASQNVN) are compositionally biased toward polar residues. Residues 130-140 (PDKEQSKHKQN) show a composition bias toward basic and acidic residues. 4 stretches are compositionally biased toward polar residues: residues 141–151 (ESQSANKNGND), 250–266 (PQRQQTSRRSNRIQTRS), 1360–1373 (FRTTGYSQSNATTD), and 2427–2438 (HSVSSNPSTLTA). FIVAR domains are found at residues 2524–2580 (AKNH…VSDA), 2610–2666 (SKNN…ISDE), 2687–2750 (DTHA…VQSA), 2780–2836 (AKTK…IAAE), 2864–2919 (AKTQ…IRQN), 2947–3002 (AKNQ…INTN), 3030–3085 (AKTQ…INDK), 3154–3212 (AMTK…VNQK), 3280–3339 (AMTG…VNNA), 3407–3465 (AMGN…VNRA), 3533–3591 (AMGN…VTEA), 3659–3717 (AMNT…ITQK), 3785–3843 (AMAS…VEAA), 3911–3969 (AMGN…VEQA), 4037–4095 (AMGT…VTAA), 4163–4221 (AMKG…ITQA), 4289–4347 (QMGN…VEAA), 4415–4473 (AMAN…VENA), 4541–4599 (AMGT…INQI), 4667–4725 (AMGQ…VDRA), 4793–4851 (AMNS…VDNA), 4919–4977 (AMGA…INGM), 5045–5103 (AMTA…VNSA), 5171–5229 (AMKG…ITQV), 5297–5355 (AMHS…VEQA), 5423–5481 (AMGQ…VERA), 5549–5607 (AMTA…VTNA), 5675–5733 (AMKG…INQA), 5801–5859 (AMTN…VETA), 5927–5985 (AMSN…VEQA), 6053–6111 (AMNQ…INQK), 6179–6236 (AMGN…VQAA), 6304–6362 (AMGQ…VEAA), 6430–6488 (AMQR…VEQA), 6556–6614 (AMDQ…VTAA), 6682–6740 (AMNQ…VTQA), 6818–6866 (DKDQ…VEAA), and 6934–6992 (AMGN…VEAA).

The protein is Extracellular matrix-binding protein EbhB (ebhB) of Staphylococcus aureus (strain Newman).